Consider the following 291-residue polypeptide: 4-diphosphocytidyl-2-C-methyl-D-erythritol kinase (291 aa).

Lys-19 is an active-site residue. 102–112 (PMGGGIGGGSS) is an ATP binding site. Asp-144 is an active-site residue.

It belongs to the GHMP kinase family. IspE subfamily.

The enzyme catalyses 4-CDP-2-C-methyl-D-erythritol + ATP = 4-CDP-2-C-methyl-D-erythritol 2-phosphate + ADP + H(+). Its pathway is isoprenoid biosynthesis; isopentenyl diphosphate biosynthesis via DXP pathway; isopentenyl diphosphate from 1-deoxy-D-xylulose 5-phosphate: step 3/6. Catalyzes the phosphorylation of the position 2 hydroxy group of 4-diphosphocytidyl-2C-methyl-D-erythritol. The sequence is that of 4-diphosphocytidyl-2-C-methyl-D-erythritol kinase from Ectopseudomonas mendocina (strain ymp) (Pseudomonas mendocina).